The following is a 330-amino-acid chain: 2-oxoisovalerate dehydrogenase subunit alpha (330 aa).

Substrate contacts are provided by residues phenylalanine 44, tyrosine 73, 107-110 (MPGH), and serine 123. 72–74 (YYR) is a binding site for thiamine diphosphate. Thiamine diphosphate is bound by residues 123–125 (SPV), 153–159 (GEGSSNQ), 183–187 (NKYAI), and histidine 252. Mg(2+) contacts are provided by glutamate 154, asparagine 183, and tyrosine 185. The disordered stretch occupies residues 249 to 272 (LTPHSSDDDDSSYRGREEVEEAKK). Over residues 259 to 272 (SSYRGREEVEEAKK) the composition is skewed to basic and acidic residues.

The protein belongs to the BCKDHA family. As to quaternary structure, heterotetramer of two alpha and two beta chains. Directly associated with ODBB in the E1 complex. Requires thiamine diphosphate as cofactor.

It carries out the reaction N(6)-[(R)-lipoyl]-L-lysyl-[protein] + 3-methyl-2-oxobutanoate + H(+) = N(6)-[(R)-S(8)-2-methylpropanoyldihydrolipoyl]-L-lysyl-[protein] + CO2. The branched-chain alpha-keto dehydrogenase complex catalyzes the overall conversion of alpha-keto acids to acyl-CoA and CO(2). It contains multiple copies of three enzymatic components: branched-chain alpha-keto acid decarboxylase (E1), lipoamide acyltransferase (E2) and lipoamide dehydrogenase (E3). The protein is 2-oxoisovalerate dehydrogenase subunit alpha (bfmBAA) of Bacillus subtilis (strain 168).